Reading from the N-terminus, the 302-residue chain is Sulfate adenylyltransferase subunit 2 (302 aa).

The protein belongs to the PAPS reductase family. CysD subfamily. In terms of assembly, heterodimer composed of CysD, the smaller subunit, and CysN.

The enzyme catalyses sulfate + ATP + H(+) = adenosine 5'-phosphosulfate + diphosphate. It functions in the pathway sulfur metabolism; hydrogen sulfide biosynthesis; sulfite from sulfate: step 1/3. Its function is as follows. With CysN forms the ATP sulfurylase (ATPS) that catalyzes the adenylation of sulfate producing adenosine 5'-phosphosulfate (APS) and diphosphate, the first enzymatic step in sulfur assimilation pathway. APS synthesis involves the formation of a high-energy phosphoric-sulfuric acid anhydride bond driven by GTP hydrolysis by CysN coupled to ATP hydrolysis by CysD. In Parabacteroides distasonis (strain ATCC 8503 / DSM 20701 / CIP 104284 / JCM 5825 / NCTC 11152), this protein is Sulfate adenylyltransferase subunit 2.